Consider the following 265-residue polypeptide: MSDIITAFILGIVEGLAEFLPISSTGHLILVGHLLGFEGERAKTFEIVIQLGAILAIAILYHKRLVSLCNLKPLLRKEKKFNAFHVFLGVFPAVVAGLLLHDVIKTYLFQPYTVVIGLVAGAILMIFAEVKKQEATSYSLDDLTYRQALTIGLFQCLAVYPGFSRAGSTISGGLLAKVNYKTASEFSFLIALPVMVGATGLDLLKSWTYLSVDDIPMFAVGFITSFIVAMLAVVTFLKLLEKIGLKPFAYYRILLAILFTVFVLL.

The next 7 helical transmembrane spans lie at 4–24, 42–62, 84–104, 108–128, 184–204, 217–237, and 245–265; these read IITA…PISS, AKTF…ILYH, FHVF…HDVI, LFQP…MIFA, SEFS…LDLL, MFAV…VTFL, and LKPF…FVLL.

It belongs to the UppP family.

The protein localises to the cell membrane. The catalysed reaction is di-trans,octa-cis-undecaprenyl diphosphate + H2O = di-trans,octa-cis-undecaprenyl phosphate + phosphate + H(+). Its function is as follows. Catalyzes the dephosphorylation of undecaprenyl diphosphate (UPP). Confers resistance to bacitracin. The polypeptide is Undecaprenyl-diphosphatase 1 (Bacillus anthracis).